The primary structure comprises 1070 residues: uncharacterized protein (1070 aa).

Disordered stretches follow at residues 66–88 (EKEKETNNENTSNVNKIKSPGLE), 355–388 (DLDFSNVRNKNKEDDMDFSNVRNKKKEDDMDFSN), 423–483 (EDDL…EQID), 667–692 (EELKNDISSETTKEEKNTEHKKEETE), and 735–786 (SKTQ…NNNN). A compositionally biased stretch (low complexity) spans 73 to 83 (NENTSNVNKIK). 2 stretches are compositionally biased toward basic and acidic residues: residues 435 to 460 (KKEESKENDTNKSEKPLYLRRLEEYR) and 474 to 483 (MKMHEKEQID). A coiled-coil region spans residues 475-736 (KMHEKEQIDD…EMRLQLIRSK (262 aa)). The span at 735 to 745 (SKTQGTSSTFI) shows a compositional bias: polar residues. Positions 751-765 (KHLESLKEEKKKEVK) are enriched in basic and acidic residues. Low complexity predominate over residues 773 to 786 (NNNNNNNNNNNNNN).

This is an uncharacterized protein from Plasmodium falciparum (isolate 3D7).